A 115-amino-acid chain; its full sequence is Ribonuclease P protein component (115 aa).

The protein belongs to the RnpA family. Consists of a catalytic RNA component (M1 or rnpB) and a protein subunit.

It catalyses the reaction Endonucleolytic cleavage of RNA, removing 5'-extranucleotides from tRNA precursor.. Its function is as follows. RNaseP catalyzes the removal of the 5'-leader sequence from pre-tRNA to produce the mature 5'-terminus. It can also cleave other RNA substrates such as 4.5S RNA. The protein component plays an auxiliary but essential role in vivo by binding to the 5'-leader sequence and broadening the substrate specificity of the ribozyme. The polypeptide is Ribonuclease P protein component (Bacillus cereus (strain G9842)).